A 479-amino-acid polypeptide reads, in one-letter code: Aspartyl/glutamyl-tRNA(Asn/Gln) amidotransferase subunit B (479 aa).

The protein belongs to the GatB/GatE family. GatB subfamily. In terms of assembly, heterotrimer of A, B and C subunits.

The enzyme catalyses L-glutamyl-tRNA(Gln) + L-glutamine + ATP + H2O = L-glutaminyl-tRNA(Gln) + L-glutamate + ADP + phosphate + H(+). The catalysed reaction is L-aspartyl-tRNA(Asn) + L-glutamine + ATP + H2O = L-asparaginyl-tRNA(Asn) + L-glutamate + ADP + phosphate + 2 H(+). Its function is as follows. Allows the formation of correctly charged Asn-tRNA(Asn) or Gln-tRNA(Gln) through the transamidation of misacylated Asp-tRNA(Asn) or Glu-tRNA(Gln) in organisms which lack either or both of asparaginyl-tRNA or glutaminyl-tRNA synthetases. The reaction takes place in the presence of glutamine and ATP through an activated phospho-Asp-tRNA(Asn) or phospho-Glu-tRNA(Gln). The sequence is that of Aspartyl/glutamyl-tRNA(Asn/Gln) amidotransferase subunit B from Myxococcus xanthus (strain DK1622).